The chain runs to 88 residues: Co-chaperonin GroES (88 aa).

Belongs to the GroES chaperonin family. As to quaternary structure, heptamer of 7 subunits arranged in a ring. Interacts with the chaperonin GroEL.

It localises to the cytoplasm. Together with the chaperonin GroEL, plays an essential role in assisting protein folding. The GroEL-GroES system forms a nano-cage that allows encapsulation of the non-native substrate proteins and provides a physical environment optimized to promote and accelerate protein folding. GroES binds to the apical surface of the GroEL ring, thereby capping the opening of the GroEL channel. The chain is Co-chaperonin GroES from Thermodesulfovibrio yellowstonii (strain ATCC 51303 / DSM 11347 / YP87).